A 44-amino-acid polypeptide reads, in one-letter code: Photosystem I reaction center subunit IX (44 aa).

A helical membrane pass occupies residues 7-27 (YLSVAPVLSTLWFGALAGLLI).

It belongs to the PsaJ family.

It localises to the plastid. Its subcellular location is the chloroplast thylakoid membrane. In terms of biological role, may help in the organization of the PsaE and PsaF subunits. The sequence is that of Photosystem I reaction center subunit IX from Oryza nivara (Indian wild rice).